A 325-amino-acid polypeptide reads, in one-letter code: ADP-L-glycero-D-manno-heptose-6-epimerase (325 aa).

Residues 10 to 11 (FI), 31 to 32 (DD), Lys-38, and 75 to 79 (EGACS) contribute to the NADP(+) site. Tyr-139 acts as the Proton acceptor in catalysis. Lys-143 is an NADP(+) binding site. Asn-167 serves as a coordination point for substrate. Residues Val-168 and Lys-176 each contribute to the NADP(+) site. Lys-176 serves as the catalytic Proton acceptor. Substrate-binding positions include Ser-178, His-185, 199–202 (FEGS), Arg-212, and Tyr-285.

It belongs to the NAD(P)-dependent epimerase/dehydratase family. HldD subfamily. As to quaternary structure, homopentamer. Requires NADP(+) as cofactor.

The enzyme catalyses ADP-D-glycero-beta-D-manno-heptose = ADP-L-glycero-beta-D-manno-heptose. It functions in the pathway nucleotide-sugar biosynthesis; ADP-L-glycero-beta-D-manno-heptose biosynthesis; ADP-L-glycero-beta-D-manno-heptose from D-glycero-beta-D-manno-heptose 7-phosphate: step 4/4. In terms of biological role, catalyzes the interconversion between ADP-D-glycero-beta-D-manno-heptose and ADP-L-glycero-beta-D-manno-heptose via an epimerization at carbon 6 of the heptose. The polypeptide is ADP-L-glycero-D-manno-heptose-6-epimerase (Azoarcus sp. (strain BH72)).